The following is a 179-amino-acid chain: Proteasome chaperone 3 (179 aa).

It belongs to the PSMG3 family. Component of the 20S proteasome chaperone. Forms a heterodimer with POC4 that binds to proteasome precursors. Interacts with POP2.

In terms of biological role, involved in 20S proteasome assembly, facilitating the alpha-ring formation. In Saccharomyces cerevisiae (strain ATCC 204508 / S288c) (Baker's yeast), this protein is Proteasome chaperone 3 (IRC25).